Here is a 396-residue protein sequence, read N- to C-terminus: Phosphopentomutase (396 aa).

Mn(2+) is bound by residues Asp-13, Asp-288, His-293, Asp-329, His-330, and His-341.

The protein belongs to the phosphopentomutase family. Mn(2+) is required as a cofactor.

It localises to the cytoplasm. The catalysed reaction is 2-deoxy-alpha-D-ribose 1-phosphate = 2-deoxy-D-ribose 5-phosphate. The enzyme catalyses alpha-D-ribose 1-phosphate = D-ribose 5-phosphate. It participates in carbohydrate degradation; 2-deoxy-D-ribose 1-phosphate degradation; D-glyceraldehyde 3-phosphate and acetaldehyde from 2-deoxy-alpha-D-ribose 1-phosphate: step 1/2. Its function is as follows. Isomerase that catalyzes the conversion of deoxy-ribose 1-phosphate (dRib-1-P) and ribose 1-phosphate (Rib-1-P) to deoxy-ribose 5-phosphate (dRib-5-P) and ribose 5-phosphate (Rib-5-P), respectively. This Clostridium perfringens (strain ATCC 13124 / DSM 756 / JCM 1290 / NCIMB 6125 / NCTC 8237 / Type A) protein is Phosphopentomutase.